A 595-amino-acid polypeptide reads, in one-letter code: DNA damage-binding protein CMR1 (595 aa).

Positions 20–79 (ALLDSLGLDPAGASSPFGSSPAPTSNKTKPKPKPAPKKRKAAAVIAVDEGPRRRSGRIAG) are disordered. The segment covering 29 to 46 (PAGASSPFGSSPAPTSNK) has biased composition (low complexity). Residues 47–60 (TKPKPKPAPKKRKA) show a composition bias toward basic residues. WD repeat units lie at residues 185–226 (VTNE…MEKP), 255–297 (HAKN…ELFS), 300–339 (DEDL…RESG), and 349–389 (GRGA…SISS). A disordered region spans residues 397–429 (AIEEEEEGTSTLSGQSSSLPHDTHPTRESDYST). Residues 405–415 (TSTLSGQSSSL) show a composition bias toward low complexity. Positions 417 to 426 (HDTHPTRESD) are enriched in basic and acidic residues. WD repeat units lie at residues 448–487 (QHGK…SLVD), 519–556 (LRAQ…VGLW), and 558–595 (DDVT…GDHI).

This sequence belongs to the WD repeat DDB2/WDR76 family.

In terms of biological role, DNA-binding protein that binds to both single- and double-stranded DNA. Binds preferentially to UV-damaged DNA. May be involved in DNA-metabolic processes. This is DNA damage-binding protein CMR1 from Cryptococcus neoformans var. neoformans serotype D (strain B-3501A) (Filobasidiella neoformans).